We begin with the raw amino-acid sequence, 354 residues long: Carbonic anhydrase 12 (354 aa).

The N-terminal stretch at 1–24 is a signal peptide; it reads MPHRSLRATVVLLLVILKKQPSSS. Over 25–301 the chain is Extracellular; the sequence is APLNGSKWTY…QGLLTDTGLS (277 aa). Residues Asn-28, Asn-42, Asn-80, and Asn-88 are each glycosylated (N-linked (GlcNAc...) asparagine). The Alpha-carbonic anhydrase domain maps to 30-290; that stretch reads SKWTYVGPAG…FDERLVYISF (261 aa). Cys-50 and Cys-231 are oxidised to a cystine. Catalysis depends on His-94, which acts as the Proton donor/acceptor. 3 residues coordinate Zn(2+): His-120, His-122, and His-146. 227-228 contributes to the substrate binding site; the sequence is TT. A helical membrane pass occupies residues 302–322; it reads LGIILSVALAGVLGISIVLAV. The Cytoplasmic portion of the chain corresponds to 323–354; that stretch reads SIWLFKRKKSKKGDNKGVIYKPAIKKEAEVHA.

It belongs to the alpha-carbonic anhydrase family. As to quaternary structure, homodimer. Zn(2+) is required as a cofactor.

It localises to the membrane. The protein localises to the cell membrane. The enzyme catalyses hydrogencarbonate + H(+) = CO2 + H2O. Inhibited by acetazolamide. In terms of biological role, reversible hydration of carbon dioxide. The protein is Carbonic anhydrase 12 of Mus musculus (Mouse).